The sequence spans 452 residues: MNYTQQLKQKDSEYVWHPFTQMGVYSKEEAIIIEKGKGSYLYDTNGNKYLDGYASLWVNVHGHNNKYLNKVIKKQLNKIAHSTLLGSSNIPSIELAEKLIEITPSNLRKVFYSDTGSASVEIAIKMAYQYWKNIDREKYAKKNKFITLNHGYHGDTIGAVSVGGIKTFHKIFKDLIFENIQVESPSFYRSNYDTENEMMTAILTNIEQILIERNDEIAGFILEPLIQGATGLFVHPKGFLKEVEKLCKKYDVLLICDEVAVGFGRTGKMFACNHEDVQPDIMCLGKAITGGYLPLAATLTSKKIYNAFLSDSHGVNTFFHGHTYTGNQIVCTVALENIRLYEKRKLLSHIETTSSTLEKQLHALKRHRNVGDVRGRGLMFGVELVTDKDSKTPLEIEKVERIVRNCKENGLMIRNLENVITFVPVLSMSNKEVKTMVRIFKKAVHNILDRKC.

A pyridoxal 5'-phosphate-binding site is contributed by 116–117; that stretch reads GS. Tyr-152 contacts substrate. Asp-257 contributes to the pyridoxal 5'-phosphate binding site. Residues Lys-286, Gly-321, and Arg-414 each contribute to the substrate site. An N6-(pyridoxal phosphate)lysine modification is found at Lys-286.

The protein belongs to the class-III pyridoxal-phosphate-dependent aminotransferase family. BioA subfamily. Homodimer. It depends on pyridoxal 5'-phosphate as a cofactor.

It is found in the cytoplasm. The enzyme catalyses (8S)-8-amino-7-oxononanoate + S-adenosyl-L-methionine = S-adenosyl-4-methylsulfanyl-2-oxobutanoate + (7R,8S)-7,8-diammoniononanoate. It functions in the pathway cofactor biosynthesis; biotin biosynthesis; 7,8-diaminononanoate from 8-amino-7-oxononanoate (SAM route): step 1/1. Its function is as follows. Catalyzes the transfer of the alpha-amino group from S-adenosyl-L-methionine (SAM) to 7-keto-8-aminopelargonic acid (KAPA) to form 7,8-diaminopelargonic acid (DAPA). It is the only aminotransferase known to utilize SAM as an amino donor. This Staphylococcus aureus (strain NCTC 8325 / PS 47) protein is Adenosylmethionine-8-amino-7-oxononanoate aminotransferase.